The chain runs to 284 residues: Flavin-dependent thymidylate synthase (284 aa).

The ThyX domain maps to 27-237; sequence GFIRVVDYMG…PLAYNAFVEY (211 aa). Residues T73, 96 to 98, and E104 each bind FAD; that span reads RHR. DUMP is bound by residues 93 to 96 and 104 to 108; these read QWIR and EYSAR. A ThyX motif motif is present at residues 96–106; it reads RHRTANVNEYS. The interval 122 to 142 is disordered; that stretch reads EQVAKQSDNNKQGSGEAFDPD. Residues 125–134 are compositionally biased toward polar residues; it reads AKQSDNNKQG. R176 is a binding site for dUMP. Residues 192–194 and H198 contribute to the FAD site; that span reads DLH. A dUMP-binding site is contributed by R203. The Involved in ionization of N3 of dUMP, leading to its activation role is filled by R203.

It belongs to the thymidylate synthase ThyX family. Homotetramer. It depends on FAD as a cofactor.

The enzyme catalyses dUMP + (6R)-5,10-methylene-5,6,7,8-tetrahydrofolate + NADPH + H(+) = dTMP + (6S)-5,6,7,8-tetrahydrofolate + NADP(+). Its pathway is pyrimidine metabolism; dTTP biosynthesis. Catalyzes the reductive methylation of 2'-deoxyuridine-5'-monophosphate (dUMP) to 2'-deoxythymidine-5'-monophosphate (dTMP) while utilizing 5,10-methylenetetrahydrofolate (mTHF) as the methyl donor, and NADPH and FADH(2) as the reductant. This Wolbachia pipientis wMel protein is Flavin-dependent thymidylate synthase.